Reading from the N-terminus, the 565-residue chain is Probable protease Gilli_2517 (565 aa).

In terms of biological role, probably a dedicated protease for substrate gasdermin bGSDM; cleaves the bGSDM precursor, releasing the pore-forming moiety, which integrates into the membrane and triggers cell death. Involved in defense against bacteriophages. Expression of bGSDM and this neighboring protease is not toxic in E.coli. The chain is Probable protease Gilli_2517 from Gillisia limnaea (strain DSM 15749 / LMG 21470 / R-8282).